The primary structure comprises 418 residues: Acyltransferase calJ (418 aa).

The Acyl-ester intermediate role is filled by Ser79. Residues Arg176 and Tyr191 each coordinate substrate.

Belongs to the class-A beta-lactamase family.

It functions in the pathway secondary metabolite biosynthesis. Acyltransferase; part of the gene cluster that mediates the biosynthesis of calbistrin A and related compounds. Calbistrin A is a secondary metabolite with an interesting structure that was recently found to have bioactivity against leukemia cells. It consists of two polyketides linked by an ester bond: a bicyclic decalin containing polyketide and a linear 12 carbon dioic acid structure. The polyketide synthase calA is probably responsible for forming the decalin moiety. Because calA lacks a designated enoylreductase (ER) domain, the required activity is provided by the trans-enoyl reductase calK. Following release from the PKS, calF then probably catalyzes the oxidation and the subsequent Diels Alder cycloisomerization that lead to the formation of the decalin moiety. The decalin polyketide backbone includes two C-methyl groups, at C7 and C11 in backbone, of which the C7 position is probably methylated by the methyltransferase domain of calA. A candidate for adding the methyl group at C11, if not done by CalA, is the cluster methyltransferase calH. Several additional tailoring enzymes within the cluster could be involved in the modification of the decalin polyketide product. Those include the 3 cytochrome P450 monooxygenases CalE, CalG and CalL, of which one might be responsible for the introduction of the extra hydroxyl group attached to the backbone of the decalin moiety, at position C9 in the backbone, that allows for attachment of the linear moiety. One tailoring enzyme activity that is expected to be involved in biosynthesis of calbistrin is an acyltransferase for connecting the two polyketide synthase products, and which could be performed by the cluster acyltransferase calJ. The enzyme responsible for the biosynthesis of the linear moiety, probably a second PKS, has not been identified yet. This Penicillium decumbens protein is Acyltransferase calJ.